A 1037-amino-acid polypeptide reads, in one-letter code: Ras guanine nucleotide exchange factor E (1037 aa).

Positions 5 to 35 (ECNNRIEYLQNKVLELESLNENLKGQLEYFQ) form a coiled coil. 8 disordered regions span residues 65-100 (NNNN…TTNN), 114-150 (TNSN…ELSN), 166-387 (TTTT…PLSN), 414-437 (TVNM…LYHS), 451-472 (SSLS…LTNP), 602-628 (INSN…NQLE), 907-935 (NTTT…QQLN), and 1004-1037 (EKET…SFKS). Composition is skewed to low complexity over residues 114-145 (TNSN…NNSN) and 166-200 (TTTT…NNNN). The span at 229-239 (PTSSRNSPTNK) shows a compositional bias: polar residues. The span at 240–276 (SSPQFLSPLSKSPLSQSTQSTTVSSPSPSWTTTVPQS) shows a compositional bias: low complexity. Polar residues predominate over residues 282 to 300 (TIVQSKSPYSPDTNISNKL). Residues 318–360 (SPSKNSPRSLNSNNNNSSATTSITTPPTTSTPTPTTSTTTTTT) show a composition bias toward low complexity. The span at 361-370 (TERRPEDRRS) shows a compositional bias: basic and acidic residues. 2 stretches are compositionally biased toward polar residues: residues 372–387 (TSPF…PLSN) and 424–437 (PRSN…LYHS). In terms of domain architecture, N-terminal Ras-GEF spans 496–694 (NGFIVKGGTI…NLKRLLTNDR (199 aa)). The region spanning 726–1003 (DPTEIARQLT…YKLSLICEPK (278 aa)) is the Ras-GEF domain. The segment covering 907 to 930 (NTTTTTTTTTTTTTTNTTTSNNNN) has biased composition (low complexity). Polar residues predominate over residues 1027–1037 (SVTSLLNSFKS).

In terms of biological role, promotes the exchange of Ras-bound GDP by GTP. Seems to play a role in chemotaxis. The sequence is that of Ras guanine nucleotide exchange factor E (gefE) from Dictyostelium discoideum (Social amoeba).